Reading from the N-terminus, the 161-residue chain is Putative 4-hydroxy-4-methyl-2-oxoglutarate aldolase (161 aa).

Residues 77–80 and arginine 99 contribute to the substrate site; that span reads GGNL. A divalent metal cation is bound at residue aspartate 100.

This sequence belongs to the class II aldolase/RraA-like family. In terms of assembly, homotrimer. A divalent metal cation serves as cofactor.

The enzyme catalyses 4-hydroxy-4-methyl-2-oxoglutarate = 2 pyruvate. It carries out the reaction oxaloacetate + H(+) = pyruvate + CO2. Its function is as follows. Catalyzes the aldol cleavage of 4-hydroxy-4-methyl-2-oxoglutarate (HMG) into 2 molecules of pyruvate. Also contains a secondary oxaloacetate (OAA) decarboxylase activity due to the common pyruvate enolate transition state formed following C-C bond cleavage in the retro-aldol and decarboxylation reactions. In Methylococcus capsulatus (strain ATCC 33009 / NCIMB 11132 / Bath), this protein is Putative 4-hydroxy-4-methyl-2-oxoglutarate aldolase.